Here is a 211-residue protein sequence, read N- to C-terminus: Uridine kinase (211 aa).

Position 13–20 (13–20) interacts with ATP; it reads GGSGSGKT.

It belongs to the uridine kinase family.

It is found in the cytoplasm. It carries out the reaction uridine + ATP = UMP + ADP + H(+). The catalysed reaction is cytidine + ATP = CMP + ADP + H(+). The protein operates within pyrimidine metabolism; CTP biosynthesis via salvage pathway; CTP from cytidine: step 1/3. Its pathway is pyrimidine metabolism; UMP biosynthesis via salvage pathway; UMP from uridine: step 1/1. The protein is Uridine kinase of Lactobacillus johnsonii (strain CNCM I-12250 / La1 / NCC 533).